Reading from the N-terminus, the 1712-residue chain is Latent-transforming growth factor beta-binding protein 1 (1712 aa).

An N-terminal signal peptide occupies residues 1 to 20; that stretch reads MAGAWLRWGLLLWAGLLAWS. The interval 63–148 is disordered; that stretch reads SSTATSSRSL…QDTQSSGGSR (86 aa). The span at 136–147 shows a compositional bias: polar residues; it reads KVQQDTQSSGGS. The EGF-like 1 domain maps to 181-213; that stretch reads TKPSCVPPCQNGGMCLRPQFCVCKPGTKGKACE. 3 disulfide bridges follow: Cys185–Cys195, Cys189–Cys201, and Cys203–Cys212. N-linked (GlcNAc...) asparagine glycans are attached at residues Asn339 and Asn370. The EGF-like 2 domain occupies 391-423; the sequence is RVVICHLPCMNGGQCSSRDKCQCPPNFTGKLCQ. 6 cysteine pairs are disulfide-bonded: Cys395–Cys405, Cys399–Cys411, Cys413–Cys422, Cys551–Cys573, Cys560–Cys586, and Cys574–Cys589. N-linked (GlcNAc...) asparagine glycosylation occurs at Asn416. The 53-residue stretch at 549 to 601 folds into the TB 1 domain; it reads GRCFQETIGSQCGKALPGLSKQEDCCGTVGTSWGFNKCQKCPKKQSYHGYTQM. A glycan (N-linked (GlcNAc...) asparagine) is linked at Asn612. Residues 618 to 658 form the EGF-like 3; calcium-binding domain; the sequence is DINECQLQGVCPNGECLNTMGSYRCSCKMGFGPDPTFSSCV. Cystine bridges form between Cys622-Cys633, Cys628-Cys642, Cys644-Cys657, Cys671-Cys694, Cys681-Cys706, Cys695-Cys709, and Cys696-Cys721. An O-linked (Glc) serine glycan is attached at Ser639. Residues 669–721 form the TB 2 domain; the sequence is GPCYRLVSPGRQCMHPLSVHLTKQICCCSVGKAWGPQCEKCPLPGTAAFKEIC. A disordered region spans residues 752-803; the sequence is KNTQPVAKSTHPPPLPAKEEPVEALTSSREHGPGVAEPEVVTAPPEKEIPSL. Residues Thr761 and Thr793 are each glycosylated (O-linked (GalNAc...) threonine). The EGF-like 4; calcium-binding domain maps to 865–906; it reads EINECTVNPDICGAGHCINLPVRYTCICYEGYKFSEQQRKCI. 37 disulfide bridges follow: Cys869/Cys881, Cys876/Cys890, Cys892/Cys905, Cys911/Cys923, Cys918/Cys932, Cys934/Cys947, Cys953/Cys964, Cys959/Cys973, Cys976/Cys988, Cys994/Cys1005, Cys1000/Cys1014, Cys1017/Cys1028, Cys1034/Cys1045, Cys1040/Cys1054, Cys1056/Cys1069, Cys1075/Cys1086, Cys1081/Cys1095, Cys1097/Cys1110, Cys1116/Cys1127, Cys1122/Cys1136, Cys1138/Cys1151, Cys1157/Cys1169, Cys1164/Cys1178, Cys1180/Cys1192, Cys1198/Cys1210, Cys1204/Cys1219, Cys1221/Cys1234, Cys1240/Cys1252, Cys1246/Cys1261, Cys1263/Cys1276, Cys1282/Cys1294, Cys1289/Cys1303, Cys1305/Cys1319, Cys1340/Cys1363, Cys1350/Cys1375, Cys1364/Cys1380, and Cys1365/Cys1392. Residues 907–948 form the EGF-like 5; calcium-binding domain; that stretch reads DIDECAQAQHLCSQGRCENTEGSFLCICPAGFIASEEGSNCI. Residue Ser929 is glycosylated (O-linked (Glc) serine). In terms of domain architecture, EGF-like 6; calcium-binding spans 949-989; the sequence is DVDECLRPDVCRDGRCINTAGAFRCEYCDSGYRMSRRGHCE. A (3R)-3-hydroxyasparagine modification is found at Asn966. One can recognise an EGF-like 7; calcium-binding domain in the interval 990 to 1029; the sequence is DIDECLTPSTCPEEQCVNSPGSYQCVPCTEGFRGWNGQCL. An O-linked (Glc) serine glycan is attached at Ser1011. The 41-residue stretch at 1030–1070 folds into the EGF-like 8; calcium-binding domain; that stretch reads DVDECLQPKVCTNGSCTNLEGSYMCSCHKGYSPTPDHRHCQ. Residue Asn1042 is glycosylated (N-linked (GlcNAc...) asparagine). O-linked (Glc) serine glycosylation is present at Ser1051. One can recognise an EGF-like 9; calcium-binding domain in the interval 1071 to 1111; it reads DIDECQQGNLCMNGQCKNTDGSFRCTCGQGYQLSAAKDQCE. In terms of domain architecture, EGF-like 10; calcium-binding spans 1112-1152; it reads DIDECEHRHLCSHGQCRNTEGSFQCLCNQGYRASVLGDHCE. Asn1129 carries the (3R)-3-hydroxyasparagine modification. Ser1133 carries O-linked (Glc) serine glycosylation. An EGF-like 11; calcium-binding domain is found at 1153-1193; the sequence is DINECLEDSSVCQGGDCINTAGSYDCTCPDGLQLNDNKGCQ. One can recognise an EGF-like 12; calcium-binding domain in the interval 1194–1235; the sequence is DINECAQPGLCAPHGECLNTQGSFHCVCEQGFSISADGRTCE. Residue Ser1216 is glycosylated (O-linked (Glc) serine). One can recognise an EGF-like 13; calcium-binding domain in the interval 1236-1277; that stretch reads DIDECVNNTVCDSHGFCDNTAGSFRCLCYQGFQAPQDGQGCV. Asn1242 is a glycosylation site (N-linked (GlcNAc...) asparagine). The EGF-like 14; calcium-binding domain occupies 1278-1320; it reads DVNECELLSGVCGEAFCENVEGSFLCVCADENQEYSPMTGQCR. The tract at residues 1335–1402 is 8-Cys3 region; the sequence is EEKKECYYNL…PRGKGFVPAG (68 aa). A TB 3 domain is found at 1338–1392; it reads KECYYNLNDASLCDNVLAPNVTKQECCCTSGAGWGDNCEIFPCPVQGTAEFSEMC. Asn1357 carries an N-linked (GlcNAc...) asparagine glycan. Position 1405 is a phosphoserine (Ser1405). In terms of domain architecture, EGF-like 15; calcium-binding spans 1415–1457; that stretch reads DADECLLFGEEICKNGYCLNTQPGYECYCKEGTYYDPVKLQCF. Cystine bridges form between Cys1419–Cys1432, Cys1427–Cys1441, Cys1443–Cys1456, Cys1462–Cys1473, Cys1468–Cys1482, Cys1484–Cys1497, Cys1517–Cys1541, Cys1527–Cys1553, Cys1542–Cys1556, and Cys1543–Cys1568. Residues 1458-1498 enclose the EGF-like 16; calcium-binding domain; sequence DMDECQDPNSCIDGQCVNTEGSYNCFCTHPMVLDASEKRCV. Residue Ser1479 is glycosylated (O-linked (Glc) serine). The C-terminal domain stretch occupies residues 1498-1712; it reads VQPTESNEQI…LNLDKDSDLE (215 aa). One can recognise a TB 4 domain in the interval 1515–1568; that stretch reads DLCWEHLSEEYVCSRPLVGKQTTYTECCCLYGEAWGMQCALCPMKDSDDYAQLC. Phosphoserine is present on residues Ser1588 and Ser1607. Positions 1612 to 1652 constitute an EGF-like 17 domain; that stretch reads QAEECGILNGCENGRCVRVQEGYTCDCFDGYHLDMAKMTCV. 6 cysteine pairs are disulfide-bonded: Cys1616–Cys1627, Cys1622–Cys1636, Cys1638–Cys1651, Cys1657–Cys1672, Cys1667–Cys1681, and Cys1683–Cys1696. In terms of domain architecture, EGF-like 18; calcium-binding spans 1653 to 1697; it reads DVNECSELNNRMSLCKNAKCINTEGSYKCVCLPGYVPSDKPNYCT. A glycan (O-linked (Glc) serine) is linked at Ser1678.

It belongs to the LTBP family. As to quaternary structure, interacts with TGFB1; associates via disulfide bonds with the Latency-associated peptide chain (LAP) regulatory chain of TGFB1, leading to regulate activation of TGF-beta-1. LTBP1 does not bind directly to TGF-beta-1, the active chain of TGFB1. Interacts (via C-terminal domain) with FBN1 (via N-terminal domain). Interacts with FBN2. Interacts with ADAMTSL2. Interacts with EFEMP2. Contains hydroxylated asparagine residues. In terms of processing, two intrachain disulfide bonds from the TB3 domain are rearranged upon TGFB1 binding, and form interchain bonds with TGFB1 propeptide, anchoring it to the extracellular matrix. Post-translationally, O-glycosylated on serine residues by POGLUT2 and POGLUT3.

It is found in the secreted. It localises to the extracellular space. Its subcellular location is the extracellular matrix. Its function is as follows. Key regulator of transforming growth factor beta (TGFB1, TGFB2 and TGFB3) that controls TGF-beta activation by maintaining it in a latent state during storage in extracellular space. Associates specifically via disulfide bonds with the Latency-associated peptide (LAP), which is the regulatory chain of TGF-beta, and regulates integrin-dependent activation of TGF-beta. Outcompeted by LRRC32/GARP for binding to LAP regulatory chain of TGF-beta. The protein is Latent-transforming growth factor beta-binding protein 1 (Ltbp1) of Rattus norvegicus (Rat).